Consider the following 103-residue polypeptide: Putative RNA-binding protein RbpB (103 aa).

One can recognise an RRM domain in the interval S2 to P79. Basic and acidic residues predominate over residues V74–G85. A disordered region spans residues V74–Y103. The segment covering G92–Y103 has biased composition (low complexity).

The sequence is that of Putative RNA-binding protein RbpB (rbpB) from Nostoc sp. (strain PCC 7120 / SAG 25.82 / UTEX 2576).